We begin with the raw amino-acid sequence, 315 residues long: Transaldolase (315 aa).

Lys125 acts as the Schiff-base intermediate with substrate in catalysis.

Belongs to the transaldolase family. Type 1 subfamily. As to quaternary structure, homodimer.

The protein localises to the cytoplasm. The enzyme catalyses D-sedoheptulose 7-phosphate + D-glyceraldehyde 3-phosphate = D-erythrose 4-phosphate + beta-D-fructose 6-phosphate. The protein operates within carbohydrate degradation; pentose phosphate pathway; D-glyceraldehyde 3-phosphate and beta-D-fructose 6-phosphate from D-ribose 5-phosphate and D-xylulose 5-phosphate (non-oxidative stage): step 2/3. Transaldolase is important for the balance of metabolites in the pentose-phosphate pathway. The chain is Transaldolase from Paracidovorax citrulli (strain AAC00-1) (Acidovorax citrulli).